We begin with the raw amino-acid sequence, 251 residues long: HTH-type transcriptional regulator UlaR (251 aa).

Residues 3 to 58 (EAQRHQILLEMLAQLGFVTVEKVVERLGISPATARRDINKLDESGKLKKVRNGAEA) form the HTH deoR-type domain. The H-T-H motif DNA-binding region spans 20 to 39 (VTVEKVVERLGISPATARRD).

It is found in the cytoplasm. Its function is as follows. Represses ulaG and the ulaABCDEF operon. The protein is HTH-type transcriptional regulator UlaR of Escherichia coli (strain SMS-3-5 / SECEC).